A 227-amino-acid chain; its full sequence is Cytochrome c oxidase subunit 2 (227 aa).

Residues 1–14 (MAHAAQVGLQDATS) are Mitochondrial intermembrane-facing. Residues 15–45 (PIMEELITFHDHALMIIFLICFLVLYALFLT) traverse the membrane as a helical segment. The Mitochondrial matrix portion of the chain corresponds to 46–59 (LTTKLTSTNISDAQ). Residues 60–87 (EMETIWTILPAIILVLIALPSLRILYMT) traverse the membrane as a helical segment. Over 88-227 (DEINDPSFTI…IFEMGPVFAL (140 aa)) the chain is Mitochondrial intermembrane. Cu cation is bound by residues His161, Cys196, Glu198, Cys200, His204, and Met207. Glu198 is a Mg(2+) binding site.

It belongs to the cytochrome c oxidase subunit 2 family. Component of the cytochrome c oxidase (complex IV, CIV), a multisubunit enzyme composed of 14 subunits. The complex is composed of a catalytic core of 3 subunits MT-CO1, MT-CO2 and MT-CO3, encoded in the mitochondrial DNA, and 11 supernumerary subunits COX4I, COX5A, COX5B, COX6A, COX6B, COX6C, COX7A, COX7B, COX7C, COX8 and NDUFA4, which are encoded in the nuclear genome. The complex exists as a monomer or a dimer and forms supercomplexes (SCs) in the inner mitochondrial membrane with NADH-ubiquinone oxidoreductase (complex I, CI) and ubiquinol-cytochrome c oxidoreductase (cytochrome b-c1 complex, complex III, CIII), resulting in different assemblies (supercomplex SCI(1)III(2)IV(1) and megacomplex MCI(2)III(2)IV(2)). Found in a complex with TMEM177, COA6, COX18, COX20, SCO1 and SCO2. Interacts with TMEM177 in a COX20-dependent manner. Interacts with COX20. Interacts with COX16. The cofactor is Cu cation.

The protein resides in the mitochondrion inner membrane. The catalysed reaction is 4 Fe(II)-[cytochrome c] + O2 + 8 H(+)(in) = 4 Fe(III)-[cytochrome c] + 2 H2O + 4 H(+)(out). Its function is as follows. Component of the cytochrome c oxidase, the last enzyme in the mitochondrial electron transport chain which drives oxidative phosphorylation. The respiratory chain contains 3 multisubunit complexes succinate dehydrogenase (complex II, CII), ubiquinol-cytochrome c oxidoreductase (cytochrome b-c1 complex, complex III, CIII) and cytochrome c oxidase (complex IV, CIV), that cooperate to transfer electrons derived from NADH and succinate to molecular oxygen, creating an electrochemical gradient over the inner membrane that drives transmembrane transport and the ATP synthase. Cytochrome c oxidase is the component of the respiratory chain that catalyzes the reduction of oxygen to water. Electrons originating from reduced cytochrome c in the intermembrane space (IMS) are transferred via the dinuclear copper A center (CU(A)) of subunit 2 and heme A of subunit 1 to the active site in subunit 1, a binuclear center (BNC) formed by heme A3 and copper B (CU(B)). The BNC reduces molecular oxygen to 2 water molecules using 4 electrons from cytochrome c in the IMS and 4 protons from the mitochondrial matrix. The sequence is that of Cytochrome c oxidase subunit 2 (MT-CO2) from Gorilla gorilla gorilla (Western lowland gorilla).